Here is a 239-residue protein sequence, read N- to C-terminus: DNA repair protein RecO (239 aa).

This sequence belongs to the RecO family.

In terms of biological role, involved in DNA repair and RecF pathway recombination. The chain is DNA repair protein RecO from Bifidobacterium animalis subsp. lactis (strain AD011).